Here is a 294-residue protein sequence, read N- to C-terminus: Protease HtpX (294 aa).

2 helical membrane-spanning segments follow: residues 4–24 (IALFLLTNLAVMVVFGLVLSL) and 34–52 (GLLIMALLFGFGGSIVSLM). A Zn(2+)-binding site is contributed by histidine 139. Glutamate 140 is a catalytic residue. Histidine 143 is a Zn(2+) binding site. Transmembrane regions (helical) follow at residues 158 to 178 (VVNTFVIFISRVIAQIAAGFL) and 194 to 214 (LIYFAVATVLELVFGILASII). Glutamate 223 contacts Zn(2+).

This sequence belongs to the peptidase M48B family. Zn(2+) is required as a cofactor.

It is found in the cell inner membrane. In Klebsiella pneumoniae subsp. pneumoniae (strain ATCC 700721 / MGH 78578), this protein is Protease HtpX.